Here is a 365-residue protein sequence, read N- to C-terminus: tRNA-specific 2-thiouridylase MnmA (365 aa).

ATP is bound by residues 14 to 21 (AMSGGVDS) and L40. The active-site Nucleophile is the C108. An intrachain disulfide couples C108 to C204. G132 provides a ligand contact to ATP. The tract at residues 154–156 (KDQ) is interaction with tRNA. C204 acts as the Cysteine persulfide intermediate in catalysis.

It belongs to the MnmA/TRMU family.

It is found in the cytoplasm. The enzyme catalyses S-sulfanyl-L-cysteinyl-[protein] + uridine(34) in tRNA + AH2 + ATP = 2-thiouridine(34) in tRNA + L-cysteinyl-[protein] + A + AMP + diphosphate + H(+). Its function is as follows. Catalyzes the 2-thiolation of uridine at the wobble position (U34) of tRNA, leading to the formation of s(2)U34. The polypeptide is tRNA-specific 2-thiouridylase MnmA (Rickettsia massiliae (strain Mtu5)).